The primary structure comprises 487 residues: L-tartrate/succinate antiporter (487 aa).

Helical transmembrane passes span 10–30 (YLAP…AGLE), 33–53 (TWLY…EPVP), 54–74 (GAVV…WLLF), 93–113 (WAVS…FMFG), 137–157 (TLFL…VTPS), 189–209 (IGSY…AIFL), 236–256 (FLGM…LAYV), 292–312 (LMVG…AAMV), 313–333 (GYSV…DIVS), 340–360 (VFFW…TGFI), 370–390 (SLSG…FYLL), 393–413 (FFAS…AAAL), 418–438 (IPLP…SILT), and 465–485 (IFGL…MPVV).

It belongs to the SLC13A/DASS transporter (TC 2.A.47) family. DIT1 subfamily.

It localises to the cell inner membrane. The enzyme catalyses (2R,3R)-tartrate(out) + succinate(in) = (2R,3R)-tartrate(in) + succinate(out). In terms of biological role, catalyzes the uptake of tartrate in exchange for intracellular succinate. Essential for anaerobic L-tartrate fermentation. The protein is L-tartrate/succinate antiporter (ttdT) of Shigella flexneri.